A 171-amino-acid chain; its full sequence is Large ribosomal subunit protein bL21 (171 aa).

The interval 144-171 (AAPAKAEAAPKKKAAPKKAAAKTEEGEA) is disordered. The span at 154 to 163 (KKKAAPKKAA) shows a compositional bias: basic residues.

The protein belongs to the bacterial ribosomal protein bL21 family. Part of the 50S ribosomal subunit. Contacts protein L20.

This protein binds to 23S rRNA in the presence of protein L20. The sequence is that of Large ribosomal subunit protein bL21 from Caulobacter vibrioides (strain ATCC 19089 / CIP 103742 / CB 15) (Caulobacter crescentus).